Here is a 360-residue protein sequence, read N- to C-terminus: CLIP domain-containing serine protease B4 (360 aa).

A signal peptide spans 1–24 (MIGNRVINLLIVATLALAGQTVLA). The region spanning 30-83 (DCVNPVGEAGKCVLFRECQPLVDIYNKPVNTPDDTQFLTESRCGLYERKTLVCC) is the Clip domain. Disulfide bonds link C31/C82, C41/C72, C47/C83, and C138/C154. The 253-residue stretch at 108–360 (VIGGQPTKID…YVDWIKDNIY (253 aa)) folds into the Peptidase S1 domain. Active-site charge relay system residues include H153 and D213. N224 carries N-linked (GlcNAc...) asparagine glycosylation. Intrachain disulfides connect C280–C297 and C307–C336. S311 functions as the Charge relay system in the catalytic mechanism.

It belongs to the peptidase S1 family. CLIP subfamily. Interacts with SRPN2 in the hemolymph of immune-challenged female mosquitoes; the interaction results in CLIPB4 inhibition. In terms of tissue distribution, in females, expressed in fat body, cuticle, thorax and ovaries.

The protein resides in the secreted. In terms of biological role, serine protease which plays a role in the innate immune response against protozoan and bacterial pathogens, such as Plasmodium bergei, Staphylococcus aureus, Micrococcus luteus and Escherichia coli, by activating the melanization cascade. Cleaves and activates CLIPB8. In the resistant strain L3-5, involved in the melanization of killed parasite P.berghei ookinetes which results in their clearance. In the susceptible strain G3, appears to be dispensable for ookinete elimination which occurs by lysis. The polypeptide is CLIP domain-containing serine protease B4 (Anopheles gambiae (African malaria mosquito)).